The following is a 356-amino-acid chain: MTKIAFTGGGTVGHVSVNLSLIPTALSQGYEALYIGSKNGIEREMIESQLPEIKYYPISSGKLRRYISLENAKDVFKVLKGILDARKVLKKEKPDLLFSKGGFVSVPVVIAAKSLNIPTIIHESDLTPGLANKIALKFAKKIYTTFEETLNYLPKEKADFIGATIREDLKNGNAHNGYQLTGFNENKKVLLVMGGSLGSKKLNSIIRENLDALLQQYQVIHLTGKGLKDAQVKKSGYIQYEFVKEDLTDLLAITDTVISRAGSNAIYEFLTLRIPMLLVPLGLDQSRGDQIDNANHFADKGYAKAIDEEQLTAQILLQELNEMEQERTRIINNMKSYEQSYTKEALFDKMIKDALN.

Positions 166, 196, and 290 each coordinate UDP-N-acetyl-alpha-D-glucosamine.

The protein belongs to the glycosyltransferase 28 family. MurG subfamily.

It is found in the cell membrane. It carries out the reaction Mur2Ac(oyl-L-Ala-gamma-D-Glu-L-Lys-D-Ala-D-Ala)-di-trans,octa-cis-undecaprenyl diphosphate + UDP-N-acetyl-alpha-D-glucosamine = beta-D-GlcNAc-(1-&gt;4)-Mur2Ac(oyl-L-Ala-gamma-D-Glu-L-Lys-D-Ala-D-Ala)-di-trans,octa-cis-undecaprenyl diphosphate + UDP + H(+). It functions in the pathway cell wall biogenesis; peptidoglycan biosynthesis. In terms of biological role, cell wall formation. Catalyzes the transfer of a GlcNAc subunit on undecaprenyl-pyrophosphoryl-MurNAc-pentapeptide (lipid intermediate I) to form undecaprenyl-pyrophosphoryl-MurNAc-(pentapeptide)GlcNAc (lipid intermediate II). This Staphylococcus aureus (strain MW2) protein is UDP-N-acetylglucosamine--N-acetylmuramyl-(pentapeptide) pyrophosphoryl-undecaprenol N-acetylglucosamine transferase.